Consider the following 274-residue polypeptide: Large ribosomal subunit protein uL2 (274 aa).

Disordered regions lie at residues 35–60 (EPQH…GHKH) and 224–274 (VMNP…RRKK). The span at 50-60 (TTRHKGGGHKH) shows a compositional bias: basic residues. Residues 229-246 (DHPHGGGEGKTGEGRHAV) are compositionally biased toward basic and acidic residues.

The protein belongs to the universal ribosomal protein uL2 family. In terms of assembly, part of the 50S ribosomal subunit. Forms a bridge to the 30S subunit in the 70S ribosome.

In terms of biological role, one of the primary rRNA binding proteins. Required for association of the 30S and 50S subunits to form the 70S ribosome, for tRNA binding and peptide bond formation. It has been suggested to have peptidyltransferase activity; this is somewhat controversial. Makes several contacts with the 16S rRNA in the 70S ribosome. In Delftia acidovorans (strain DSM 14801 / SPH-1), this protein is Large ribosomal subunit protein uL2.